The chain runs to 626 residues: DNA mismatch repair protein MutL (626 aa).

This sequence belongs to the DNA mismatch repair MutL/HexB family.

This protein is involved in the repair of mismatches in DNA. It is required for dam-dependent methyl-directed DNA mismatch repair. May act as a 'molecular matchmaker', a protein that promotes the formation of a stable complex between two or more DNA-binding proteins in an ATP-dependent manner without itself being part of a final effector complex. This chain is DNA mismatch repair protein MutL, found in Cellvibrio japonicus (strain Ueda107) (Pseudomonas fluorescens subsp. cellulosa).